The sequence spans 268 residues: tRNA pseudouridine synthase A (268 aa).

D52 functions as the Nucleophile in the catalytic mechanism. Y110 contributes to the substrate binding site.

Belongs to the tRNA pseudouridine synthase TruA family. As to quaternary structure, homodimer.

The enzyme catalyses uridine(38/39/40) in tRNA = pseudouridine(38/39/40) in tRNA. Its function is as follows. Formation of pseudouridine at positions 38, 39 and 40 in the anticodon stem and loop of transfer RNAs. The chain is tRNA pseudouridine synthase A from Prochlorococcus marinus (strain AS9601).